Consider the following 386-residue polypeptide: Innexin unc-9 (386 aa).

The next 4 helical transmembrane spans lie at 33-53 (TAII…GFPI), 103-123 (QWVP…TIVW), 197-217 (FLYI…IFLL), and 282-302 (IFLF…CSLF).

Belongs to the pannexin family. Heterooligomer of unc-7 and unc-9. Interacts with F-actin. Expressed in PLM neurons (at protein level). Expressed in the nerve ring.

The protein resides in the cell membrane. It is found in the cell junction. Its subcellular location is the gap junction. Its function is as follows. Structural component of gap junctions. Plays a role in maintaining gap junction activity to promote locomotion. This is Innexin unc-9 from Caenorhabditis elegans.